The following is a 201-amino-acid chain: ADP-ribosylation factor-related protein 1 (201 aa).

At methionine 1 the chain carries N-acetylmethionine. Residues 24–31 (GLDNAGKT), 75–79 (DLGGQ), and 134–137 (NKQD) contribute to the GTP site.

Belongs to the small GTPase superfamily. Arf family. Interacts with SYS1.

It is found in the golgi apparatus. It localises to the trans-Golgi network. Its function is as follows. Trans-Golgi-associated GTPase that regulates protein sorting. Controls the targeting of ARL1 and its effector to the trans-Golgi. Required for the lipidation of chylomicrons in the intestine and required for VLDL lipidation in the liver. The polypeptide is ADP-ribosylation factor-related protein 1 (ARFRP1) (Bos taurus (Bovine)).